A 181-amino-acid chain; its full sequence is Large ribosomal subunit protein uL10 (181 aa).

The protein belongs to the universal ribosomal protein uL10 family. In terms of assembly, part of the ribosomal stalk of the 50S ribosomal subunit. The N-terminus interacts with L11 and the large rRNA to form the base of the stalk. The C-terminus forms an elongated spine to which L12 dimers bind in a sequential fashion forming a multimeric L10(L12)X complex.

Its function is as follows. Forms part of the ribosomal stalk, playing a central role in the interaction of the ribosome with GTP-bound translation factors. The sequence is that of Large ribosomal subunit protein uL10 from Fervidobacterium nodosum (strain ATCC 35602 / DSM 5306 / Rt17-B1).